Here is a 213-residue protein sequence, read N- to C-terminus: AN1-type zinc finger protein 5 (213 aa).

Residues 8–42 (TPGPMLCSTGCGFYGNPRTNGMCSVCYKEHLQRQQ) form an A20-type zinc finger. 4 residues coordinate Zn(2+): cysteine 14, cysteine 18, cysteine 30, and cysteine 33. The interval 39–149 (QRQQNSGRMS…EEKAPELPKP (111 aa)) is disordered. Positions 40–66 (RQQNSGRMSPMGTASGSNSPTSDSASV) are enriched in polar residues. Phosphoserine is present on residues serine 48 and serine 58. Residues 120-138 (SEPVVTQPSPSVSQPSSSQ) show a composition bias toward low complexity. Residues 139 to 148 (SEEKAPELPK) show a composition bias toward basic and acidic residues. An AN1-type zinc finger spans residues 148-194 (KPKKNRCFMCRKKVGLTGFDCRCGNLFCGLHRYSDKHNCPYDYKAEA). Residues cysteine 154, cysteine 157, cysteine 168, cysteine 170, cysteine 175, histidine 178, histidine 184, and cysteine 186 each contribute to the Zn(2+) site. Residue lysine 209 is modified to N6-acetyllysine.

Homooligomer and/or heterooligomer. Interacts (via A20-type domain) with IKBKG and RIPK1 and with TRAF6 (via AN1-type domain). Interacts with ubiquitin and polyubiquitinated proteins. Identified in a heterotrimeric complex with ubiquitin and SQSTM1, where ZFAND5 and SQSTM1 both interact with the same ubiquitin molecule.

It is found in the cytoplasm. Functionally, involved in protein degradation via the ubiquitin-proteasome system. May act by anchoring ubiquitinated proteins to the proteasome. Plays a role in ubiquitin-mediated protein degradation during muscle atrophy. Plays a role in the regulation of NF-kappa-B activation and apoptosis. Inhibits NF-kappa-B activation triggered by overexpression of RIPK1 and TRAF6 but not of RELA. Also inhibits tumor necrosis factor (TNF), IL-1 and TLR4-induced NF-kappa-B activation in a dose-dependent manner. Overexpression sensitizes cells to TNF-induced apoptosis. Is a potent inhibitory factor for osteoclast differentiation. This Rattus norvegicus (Rat) protein is AN1-type zinc finger protein 5 (Zfand5).